Consider the following 539-residue polypeptide: Lipid scramblase CLPTM1L (539 aa).

Over 1–10 (MWSGRSSFTS) the chain is Cytoplasmic. The chain crosses the membrane as a helical span at residues 11–31 (LVVGVFLVYVVHTCWVMYGIV). Residues 32–285 (YTRPCSGDSN…LKGIFVDTNL (254 aa)) are Extracellular-facing. Residues N91 and N101 are each glycosylated (N-linked (GlcNAc...) asparagine). The chain crosses the membrane as a helical span at residues 286 to 306 (YLLALTFFVAAFHLLFDFLAF). Over 307-325 (KSDISFWKKKKSMIGMSTK) the chain is Cytoplasmic. A helical membrane pass occupies residues 326–342 (AVLWRCFSTVVIFLFLL). Residues 343 to 403 (DEQTSLLVLI…TEKYDAQAMK (61 aa)) lie on the Extracellular side of the membrane. Residues 404 to 424 (YLSYLLYPLCVGGAVYSLLNI) traverse the membrane as a helical segment. The Cytoplasmic segment spans residues 425–429 (KYKSW). Residues 430–450 (YSWLINSFVNGVYAFGFLFML) form a helical membrane-spanning segment. Residues 451–539 (PQLFVNYKMK…EQPKRKPHPD (89 aa)) lie on the Extracellular side of the membrane.

Belongs to the CLPTM1 family.

It localises to the endoplasmic reticulum membrane. The catalysed reaction is a 6-(alpha-D-glucosaminyl)-1-(1,2-diacyl-sn-glycero-3-phospho)-1D-myo-inositol(in) = a 6-(alpha-D-glucosaminyl)-1-(1,2-diacyl-sn-glycero-3-phospho)-1D-myo-inositol(out). It carries out the reaction 6-(alpha-D-glucosaminyl)-(1-octadecanoyl,2-(9Z)-octadecenoyl-sn-glycero-3-phospho)-1D-myo-inositol(in) = 6-(alpha-D-glucosaminyl)-(1-octadecanoyl,2-(9Z)-octadecenoyl-sn-glycero-3-phospho)-1D-myo-inositol(out). The enzyme catalyses a 1,2-diacyl-sn-glycero-3-phospho-(1D-myo-inositol)(in) = a 1,2-diacyl-sn-glycero-3-phospho-(1D-myo-inositol)(out). It catalyses the reaction a 1,2-diacyl-sn-glycero-3-phosphocholine(in) = a 1,2-diacyl-sn-glycero-3-phosphocholine(out). The catalysed reaction is a 1,2-diacyl-sn-glycero-3-phosphoethanolamine(in) = a 1,2-diacyl-sn-glycero-3-phosphoethanolamine(out). Its function is as follows. Scramblase that mediates the translocation of glucosaminylphosphatidylinositol (alpha-D-GlcN-(1-6)-(1,2-diacyl-sn-glycero-3-phospho)-1D-myo-inositol, GlcN-PI) across the endoplasmic reticulum (ER) membrane, from the cytosolic leaflet to the luminal leaflet of the ER membrane, where it participates in the biosynthesis of glycosylphosphatidylinositol (GPI). GPI is a lipid glycoconjugate involved in post-translational modification of proteins. Can also translocate 1,2-diacyl-sn-glycero-3-phospho-(1D-myo-inositol) (phosphatidylinositol or PI), as well as several other phospholipids (1,2-diacyl-sn-glycero-3-phosphocholine, 1,2-diacyl-sn-glycero-3-phosphoethanolamine), and N-acetylglucosaminylphosphatidylinositol (GlcNAc-PI) in vitro. The polypeptide is Lipid scramblase CLPTM1L (Clptm1l) (Mus musculus (Mouse)).